Reading from the N-terminus, the 295-residue chain is Bifunctional protein FolD (295 aa).

NADP(+)-binding positions include 166–168 (GRS), Thr-195, and Val-236.

The protein belongs to the tetrahydrofolate dehydrogenase/cyclohydrolase family. In terms of assembly, homodimer.

The catalysed reaction is (6R)-5,10-methylene-5,6,7,8-tetrahydrofolate + NADP(+) = (6R)-5,10-methenyltetrahydrofolate + NADPH. The enzyme catalyses (6R)-5,10-methenyltetrahydrofolate + H2O = (6R)-10-formyltetrahydrofolate + H(+). It functions in the pathway one-carbon metabolism; tetrahydrofolate interconversion. Its function is as follows. Catalyzes the oxidation of 5,10-methylenetetrahydrofolate to 5,10-methenyltetrahydrofolate and then the hydrolysis of 5,10-methenyltetrahydrofolate to 10-formyltetrahydrofolate. This chain is Bifunctional protein FolD, found in Syntrophobacter fumaroxidans (strain DSM 10017 / MPOB).